Consider the following 258-residue polypeptide: Thiazole synthase (258 aa).

Residue lysine 100 is the Schiff-base intermediate with DXP of the active site. 1-deoxy-D-xylulose 5-phosphate is bound by residues glycine 161, 187–188 (AG), and 209–210 (NT).

The protein belongs to the ThiG family. As to quaternary structure, homotetramer. Forms heterodimers with either ThiH or ThiS.

The protein resides in the cytoplasm. It catalyses the reaction [ThiS sulfur-carrier protein]-C-terminal-Gly-aminoethanethioate + 2-iminoacetate + 1-deoxy-D-xylulose 5-phosphate = [ThiS sulfur-carrier protein]-C-terminal Gly-Gly + 2-[(2R,5Z)-2-carboxy-4-methylthiazol-5(2H)-ylidene]ethyl phosphate + 2 H2O + H(+). It functions in the pathway cofactor biosynthesis; thiamine diphosphate biosynthesis. In terms of biological role, catalyzes the rearrangement of 1-deoxy-D-xylulose 5-phosphate (DXP) to produce the thiazole phosphate moiety of thiamine. Sulfur is provided by the thiocarboxylate moiety of the carrier protein ThiS. In vitro, sulfur can be provided by H(2)S. In Campylobacter jejuni subsp. jejuni serotype O:2 (strain ATCC 700819 / NCTC 11168), this protein is Thiazole synthase.